The primary structure comprises 30 residues: Vitri peptide A (30 aa).

Positions 1-30 form a cross-link, cyclopeptide (Gly-Asn); sequence GIPCGESCVWIPCITSAIGCSCKSKVCYRN. Intrachain disulfides connect Cys-4/Cys-20, Cys-8/Cys-22, and Cys-13/Cys-27.

In terms of processing, this is a cyclic peptide.

Probably participates in a plant defense mechanism. Has strong cytotoxic activity against human lymphoma U-937 GTB and human myeloma RPMI-8226/s cell lines. The sequence is that of Vitri peptide A from Viola arvensis (European field pansy).